The following is a 184-amino-acid chain: Uroplakin-2 (184 aa).

Positions 1 to 25 (MASTLPVQTLPLILILLAVLAPGTA) are cleaved as a signal peptide. A propeptide spanning residues 26-84 (DFNISSLSGLLSPALTESLLIALPPCHLTGGNATLMVRRANDSKVVKSDFVVPPCRGRR) is cleaved from the precursor. N-linked (GlcNAc...) asparagine glycans are attached at residues N28, N57, and N66. Topologically, residues 85–155 (ELVSVVDSGS…IGLGMARTGG (71 aa)) are lumenal. Residues 156–180 (MVVITVLLSVAMFLLVVGLIVALHW) traverse the membrane as a helical segment. The Cytoplasmic portion of the chain corresponds to 181 to 184 (DARK).

The protein belongs to the uroplakin-2 family. As to quaternary structure, interacts with uroplakin-1a (UPK1A).

The protein resides in the cell membrane. Its function is as follows. Component of the asymmetric unit membrane (AUM); a highly specialized biomembrane elaborated by terminally differentiated urothelial cells. May play an important role in regulating the assembly of the AUM. This Mus musculus (Mouse) protein is Uroplakin-2 (Upk2).